The primary structure comprises 252 residues: UPF0714 protein YndL (252 aa).

A helical transmembrane segment spans residues 33–51 (IVKLLMIFMVFTPISSIYA).

Belongs to the UPF0714 family.

The protein resides in the cell membrane. The chain is UPF0714 protein YndL (yndL) from Bacillus subtilis (strain 168).